A 367-amino-acid polypeptide reads, in one-letter code: MSGSQTLVVKLGTSVLTGGSRRLNRAHIVELVRQCAQQHAAGHRIVIVTSGAIAAGREHLGYPELPATIATKQLLAAVGQSRLIQLWEQLFSIYGIHVGQMLLTRADMEDRERFLNARDTMRALLDNNIVPVINENDAVATAEIKVGDNDNLSALAAILADADKLLLLTDQAGLFTADPRNNPDAELIREVNGINDALRSIAGDSVSGLGTGGMSTKLQAADVACRAGIDVVIAAGSKPGVIGDVIADISVGTRFHAVDAPLESRKHWIFGAPPAGEITVDDGALSAILERGSSLLPKGIRRVEGNFSRGEVIRVRSLAGRDVAHAVTRYNSDALRMIAGHHSQQIAEILGYEYGPVAIHRDDMIIN.

Residue Lys-10 coordinates ATP. Substrate is bound by residues Ser-50, Asp-137, and Asn-149. Residues 169–170 and 211–217 contribute to the ATP site; these read TD and TGGMSTK. Residues 275 to 353 enclose the PUA domain; the sequence is AGEITVDDGA…QQIAEILGYE (79 aa).

The protein belongs to the glutamate 5-kinase family.

The protein localises to the cytoplasm. The catalysed reaction is L-glutamate + ATP = L-glutamyl 5-phosphate + ADP. It participates in amino-acid biosynthesis; L-proline biosynthesis; L-glutamate 5-semialdehyde from L-glutamate: step 1/2. Its function is as follows. Catalyzes the transfer of a phosphate group to glutamate to form L-glutamate 5-phosphate. The protein is Glutamate 5-kinase of Pectobacterium carotovorum subsp. carotovorum (strain PC1).